Reading from the N-terminus, the 72-residue chain is Subtilisin-chymotrypsin inhibitor-2B (72 aa).

The protein belongs to the protease inhibitor I13 (potato type I serine protease inhibitor) family.

Its function is as follows. Inhibits both subtilisin and chymotrypsin. In Hordeum vulgare (Barley), this protein is Subtilisin-chymotrypsin inhibitor-2B.